The chain runs to 461 residues: Peptidyl-prolyl cis-trans isomerase-like 4 (461 aa).

One can recognise a PPIase cyclophilin-type domain in the interval 1–171 (MSVLLETSLG…KDIRIRHTVI (171 aa)). One can recognise an RRM domain in the interval 248 to 326 (NVLFVCKLNP…HRIHVDFSQS (79 aa)). Positions 372-461 (NYNMVFDKND…DDRYRDRRRR (90 aa)) are disordered. Composition is skewed to basic and acidic residues over residues 378-392 (DKND…ERSY) and 400-461 (NYRD…RRRR).

The protein belongs to the cyclophilin-type PPIase family. PPIL4 subfamily.

It is found in the nucleus. The enzyme catalyses [protein]-peptidylproline (omega=180) = [protein]-peptidylproline (omega=0). PPIases accelerate the folding of proteins. It catalyzes the cis-trans isomerization of proline imidic peptide bonds in oligopeptides. The chain is Peptidyl-prolyl cis-trans isomerase-like 4 (cyp6) from Emericella nidulans (strain FGSC A4 / ATCC 38163 / CBS 112.46 / NRRL 194 / M139) (Aspergillus nidulans).